The primary structure comprises 44 residues: Protein Tat (44 aa).

Residues 1 to 44 (APEDSQSHQVSLSKQPASQAGGDPTGPKESKKKVESETETDPVP) form a disordered region. The segment covering 7–18 (SHQVSLSKQPAS) has biased composition (polar residues). Residue K14 forms a Glycyl lysine isopeptide (Lys-Gly) (interchain with G-Cter in ubiquitin) linkage. A Cell attachment site motif is present at residues 21–23 (GGD). Residues 26-36 (GPKESKKKVES) are compositionally biased toward basic and acidic residues.

The protein belongs to the lentiviruses Tat family. In terms of assembly, interacts with host CCNT1. Associates with the P-TEFb complex composed at least of Tat, P-TEFb (CDK9 and CCNT1), TAR RNA, RNA Pol II. Recruits the HATs CREBBP, TAF1/TFIID, EP300, PCAF and GCN5L2. Interacts with host KAT5/Tip60; this interaction targets the latter to degradation. Interacts with the host deacetylase SIRT1. Interacts with host capping enzyme RNGTT; this interaction stimulates RNGTT. Binds to host KDR, and to the host integrins ITGAV/ITGB3 and ITGA5/ITGB1. Interacts with host KPNB1/importin beta-1 without previous binding to KPNA1/importin alpha-1. Interacts with EIF2AK2. Interacts with host nucleosome assembly protein NAP1L1; this interaction may be required for the transport of Tat within the nucleus, since the two proteins interact at the nuclear rim. Interacts with host C1QBP/SF2P32; this interaction involves lysine-acetylated Tat. Interacts with the host chemokine receptors CCR2, CCR3 and CXCR4. Interacts with host DPP4/CD26; this interaction may trigger an anti-proliferative effect. Interacts with host LDLR. Interacts with the host extracellular matrix metalloproteinase MMP1. Interacts with host PRMT6; this interaction mediates Tat's methylation. Interacts with, and is ubiquitinated by MDM2/Hdm2. Interacts with host PSMC3 and HTATIP2. Interacts with STAB1; this interaction may overcome SATB1-mediated repression of IL2 and IL2RA (interleukin) in T cells by binding to the same domain than HDAC1. Interacts (when acetylated) with human CDK13, thereby increasing HIV-1 mRNA splicing and promoting the production of the doubly spliced HIV-1 protein Nef. Acetylation by EP300, CREBBP, GCN5L2/GCN5 and PCAF regulates the transactivation activity of Tat. In terms of processing, phosphorylated by EIF2AK2 on serine and threonine residues adjacent to the basic region important for TAR RNA binding and function. Phosphorylation of Tat by EIF2AK2 is dependent on the prior activation of EIF2AK2 by dsRNA. Post-translationally, asymmetrical arginine methylation by host PRMT6 seems to diminish the transactivation capacity of Tat and affects the interaction with host CCNT1. Polyubiquitination by MDM2 does not target Tat to degradation, but activates its transactivation function and fosters interaction with CCNT1 and TAR RNA.

Its subcellular location is the host nucleus. The protein resides in the host nucleolus. It is found in the host cytoplasm. It localises to the secreted. In terms of biological role, transcriptional activator that increases RNA Pol II processivity, thereby increasing the level of full-length viral transcripts. Recognizes a hairpin structure at the 5'-LTR of the nascent viral mRNAs referred to as the transactivation responsive RNA element (TAR) and recruits the cyclin T1-CDK9 complex (P-TEFb complex) that will in turn hyperphosphorylate the RNA polymerase II to allow efficient elongation. The CDK9 component of P-TEFb and other Tat-activated kinases hyperphosphorylate the C-terminus of RNA Pol II that becomes stabilized and much more processive. Other factors such as HTATSF1/Tat-SF1, SUPT5H/SPT5, and HTATIP2 are also important for Tat's function. Besides its effect on RNA Pol II processivity, Tat induces chromatin remodeling of proviral genes by recruiting the histone acetyltransferases (HATs) CREBBP, EP300 and PCAF to the chromatin. This also contributes to the increase in proviral transcription rate, especially when the provirus integrates in transcriptionally silent region of the host genome. To ensure maximal activation of the LTR, Tat mediates nuclear translocation of NF-kappa-B by interacting with host RELA. Through its interaction with host TBP, Tat may also modulate transcription initiation. Tat can reactivate a latently infected cell by penetrating in it and transactivating its LTR promoter. In the cytoplasm, Tat is thought to act as a translational activator of HIV-1 mRNAs. Functionally, extracellular circulating Tat can be endocytosed by surrounding uninfected cells via the binding to several surface receptors such as CD26, CXCR4, heparan sulfate proteoglycans (HSPG) or LDLR. Neurons are rarely infected, but they internalize Tat via their LDLR. Endosomal low pH allows Tat to cross the endosome membrane to enter the cytosol and eventually further translocate into the nucleus, thereby inducing severe cell dysfunctions ranging from cell activation to cell death. Through its interaction with nuclear HATs, Tat is potentially able to control the acetylation-dependent cellular gene expression. Tat seems to inhibit the HAT activity of KAT5/Tip60 and TAF1, and consequently modify the expression of specific cellular genes. Modulates the expression of many cellular genes involved in cell survival, proliferation or in coding for cytokines (such as IL10) or cytokine receptors. May be involved in the derepression of host interleukin IL2 expression. Mediates the activation of cyclin-dependent kinases and dysregulation of microtubule network. Tat plays a role in T-cell and neurons apoptosis. Tat induced neurotoxicity and apoptosis probably contribute to neuroAIDS. Host extracellular matrix metalloproteinase MMP1 cleaves Tat and decreases Tat's mediated neurotoxicity. Circulating Tat also acts as a chemokine-like and/or growth factor-like molecule that binds to specific receptors on the surface of the cells, affecting many cellular pathways. In the vascular system, Tat binds to ITGAV/ITGB3 and ITGA5/ITGB1 integrins dimers at the surface of endothelial cells and competes with bFGF for heparin-binding sites, leading to an excess of soluble bFGF. Binds to KDR/VEGFR-2. All these Tat-mediated effects enhance angiogenesis in Kaposi's sarcoma lesions. The chain is Protein Tat from Human immunodeficiency virus type 1 group M subtype B (isolate BRVA) (HIV-1).